Here is a 674-residue protein sequence, read N- to C-terminus: DNA ligase (674 aa).

Residues 34 to 38 (DAEYD), 84 to 85 (SL), and E116 each bind NAD(+). K118 functions as the N6-AMP-lysine intermediate in the catalytic mechanism. Residues R139, E174, K291, and K315 each coordinate NAD(+). Zn(2+)-binding residues include C409, C412, C425, and C430. The region spanning 586-674 (REGEALKGLT…TGKDPRALTA (89 aa)) is the BRCT domain.

The protein belongs to the NAD-dependent DNA ligase family. LigA subfamily. Requires Mg(2+) as cofactor. Mn(2+) is required as a cofactor.

It catalyses the reaction NAD(+) + (deoxyribonucleotide)n-3'-hydroxyl + 5'-phospho-(deoxyribonucleotide)m = (deoxyribonucleotide)n+m + AMP + beta-nicotinamide D-nucleotide.. Its function is as follows. DNA ligase that catalyzes the formation of phosphodiester linkages between 5'-phosphoryl and 3'-hydroxyl groups in double-stranded DNA using NAD as a coenzyme and as the energy source for the reaction. It is essential for DNA replication and repair of damaged DNA. This is DNA ligase from Thermus sp. (strain AK16D).